Reading from the N-terminus, the 239-residue chain is DNA repair protein RecO (239 aa).

This sequence belongs to the RecO family.

Its function is as follows. Involved in DNA repair and RecF pathway recombination. In Stenotrophomonas maltophilia (strain K279a), this protein is DNA repair protein RecO.